A 474-amino-acid polypeptide reads, in one-letter code: MTSTAAEGAGSGSLNPPHSNPSGDGGPRIRSPPGKGNKPVALADITNTGKPNAARSITVPDLVKENTKLLTLLNEKTKIIDLSRVEIYKLRLALQASKQQNLHLTQTNSQMLAEINTGKDRIKMLQHELSCTTALLKVKDSELDRKKNAGNVQQKGVKSQVLKTKASTVAVEAHHVGDSVTSGVEHHVVESQSAVSSNTVCQEPPQDGKQKRMPQRRRSSRLNQGSCEIRGVSQNTLHENPVVPVAPSTLSLEKQYGQTTGKHMKSLQNECSATVHEVIMASEFEKTEINELPQKTDLKEIPEACSSETEVQSHKIGDKAFNSKQNHLTGSQSSLSFNTVDTPEPPEDNTVKRCSKKRSSIEDVNAKLDTITSEPLRHEEKRKSRRKISARLNSVSSEHTDIVVETEHKDVIVSLAGSTSNVSMEQRTNQEQDGDCFSRKSNENQILGRRSLRRAAEKVVSYKEMPLNVKMRRP.

Disordered stretches follow at residues 1–53 (MTST…KPNA), 189–226 (VESQSAVSSNTVCQEPPQDGKQKRMPQRRRSSRLNQGS), 322–356 (NSKQNHLTGSQSSLSFNTVDTPEPPEDNTVKRCSK), and 422–442 (VSMEQRTNQEQDGDCFSRKSN). Composition is skewed to polar residues over residues 12–22 (GSLNPPHSNPS) and 190–201 (ESQSAVSSNTVC). The span at 211–220 (KRMPQRRRSS) shows a compositional bias: basic residues. Composition is skewed to polar residues over residues 322–341 (NSKQNHLTGSQSSLSFNTVD) and 422–431 (VSMEQRTNQE).

Belongs to the shugoshin family. Highly expressed in tissues containing meiocytes. Expressed at much lower level in leaves and pollen-containing flowers.

Its subcellular location is the nucleus. The protein resides in the chromosome. It is found in the centromere. In terms of biological role, plays a central role in chromosome cohesion during meiosis I by preventing premature dissociation of cohesin complex from centromeres after prophase, when most of cohesin complex dissociates from chromosomes arms. Required for maintenance of centromeric cohesion before prophase II and correct segregation of chromatids during meiosis II. Has apparently no function in mitosis. The protein is Shugoshin-1 of Zea mays (Maize).